The following is a 343-amino-acid chain: Phosphatidylglycerol--prolipoprotein diacylglyceryl transferase (343 aa).

Transmembrane regions (helical) follow at residues 22–42 (IPIR…LIIG), 54–74 (GVIY…GRLY), 97–117 (VWEG…GAWI), and 123–143 (GIPL…AQAI). Arg-145 lines the a 1,2-diacyl-sn-glycero-3-phospho-(1'-sn-glycerol) pocket. Transmembrane regions (helical) follow at residues 193 to 213 (VVHP…VLLI) and 257 to 277 (VNSF…LLAP). A disordered region spans residues 283 to 343 (PATLGGTPSS…SADNSGIVEK (61 aa)). A compositionally biased stretch (acidic residues) spans 295 to 325 (GGDDTAETEATADTEDTEDTEDGVTDAPEAD).

This sequence belongs to the Lgt family.

Its subcellular location is the cell membrane. The enzyme catalyses L-cysteinyl-[prolipoprotein] + a 1,2-diacyl-sn-glycero-3-phospho-(1'-sn-glycerol) = an S-1,2-diacyl-sn-glyceryl-L-cysteinyl-[prolipoprotein] + sn-glycerol 1-phosphate + H(+). It participates in protein modification; lipoprotein biosynthesis (diacylglyceryl transfer). Catalyzes the transfer of the diacylglyceryl group from phosphatidylglycerol to the sulfhydryl group of the N-terminal cysteine of a prolipoprotein, the first step in the formation of mature lipoproteins. In Mycobacteroides abscessus (strain ATCC 19977 / DSM 44196 / CCUG 20993 / CIP 104536 / JCM 13569 / NCTC 13031 / TMC 1543 / L948) (Mycobacterium abscessus), this protein is Phosphatidylglycerol--prolipoprotein diacylglyceryl transferase.